A 316-amino-acid polypeptide reads, in one-letter code: MSGDTCLCPASGAKPKISGFKGGGLGNKYVQLNVGGSLHYTTVRALTRHDTMLKAMFSGRMEVLTDKEGWILIDRCGKHFGTILNYLRDDTVTLPQSRQEIQELMAEAKYYLIQGLVSLCQAALQDKKDSYQPVCNIPIITSLREEDRLIESSTKPVVKLLYNRSNNKYSYTSNSDDHLLKNIELFDKLSLRFNGRVLFIKDVIGDEICCWSFYGQGRKLAEVCCTSIVYATEKKQTKVEFPEARIYEETLNVLLYETPRVPDNSLLEATSRSRSQASPSEDEDTFELRDRVRRIHVKRYSTYDDRQLGHQSAHRD.

The 69-residue stretch at 28 to 96 folds into the BTB domain; it reads KYVQLNVGGS…LRDDTVTLPQ (69 aa). Positions 268-279 are enriched in polar residues; the sequence is EATSRSRSQASP. The segment at 268–287 is disordered; that stretch reads EATSRSRSQASPSEDEDTFE. Ser-278 is subject to Phosphoserine. The residue at position 280 (Ser-280) is a Phosphoserine; by CK2.

This sequence belongs to the BACURD family. In terms of assembly, component of the BCR(TNFAIP1) E3 ubiquitin ligase complex, at least composed of CUL3, TNFAIP1/BACURD2 and RBX1. Interacts with RHOA; with a preference for RhoA-GDP. Interacts with RHOB. Interacts with CSNK2B. Interacts with PCNA. Phosphorylation at Ser-280 by CK2 facilitates the nucleus localization and increases interaction with PCNA.

Its subcellular location is the cytoplasm. It is found in the nucleus. The protein resides in the endosome. Its pathway is protein modification; protein ubiquitination. Substrate-specific adapter of a BCR (BTB-CUL3-RBX1) E3 ubiquitin-protein ligase complex involved in regulation of cytoskeleton structure. The BCR(TNFAIP1) E3 ubiquitin ligase complex mediates the ubiquitination of RHOA, leading to its degradation by the proteasome, thereby regulating the actin cytoskeleton and cell migration. Its interaction with RHOB may regulate apoptosis. May enhance the PCNA-dependent DNA polymerase delta activity. The sequence is that of BTB/POZ domain-containing adapter for CUL3-mediated RhoA degradation protein 2 (Tnfaip1) from Rattus norvegicus (Rat).